Here is a 188-residue protein sequence, read N- to C-terminus: Elongation factor P (188 aa).

The protein belongs to the elongation factor P family.

Its subcellular location is the cytoplasm. It functions in the pathway protein biosynthesis; polypeptide chain elongation. Functionally, involved in peptide bond synthesis. Stimulates efficient translation and peptide-bond synthesis on native or reconstituted 70S ribosomes in vitro. Probably functions indirectly by altering the affinity of the ribosome for aminoacyl-tRNA, thus increasing their reactivity as acceptors for peptidyl transferase. This is Elongation factor P from Methylorubrum extorquens (strain CM4 / NCIMB 13688) (Methylobacterium extorquens).